The sequence spans 488 residues: Membrane-bound lytic murein transglycosylase F (488 aa).

The signal sequence occupies residues Met1–Ala25. The segment at Gly26–Val269 is non-LT domain. Positions Asp270–Leu488 are LT domain. Glu316 is a catalytic residue.

In the N-terminal section; belongs to the bacterial solute-binding protein 3 family. It in the C-terminal section; belongs to the transglycosylase Slt family.

The protein resides in the cell outer membrane. It carries out the reaction Exolytic cleavage of the (1-&gt;4)-beta-glycosidic linkage between N-acetylmuramic acid (MurNAc) and N-acetylglucosamine (GlcNAc) residues in peptidoglycan, from either the reducing or the non-reducing ends of the peptidoglycan chains, with concomitant formation of a 1,6-anhydrobond in the MurNAc residue.. Murein-degrading enzyme that degrades murein glycan strands and insoluble, high-molecular weight murein sacculi, with the concomitant formation of a 1,6-anhydromuramoyl product. Lytic transglycosylases (LTs) play an integral role in the metabolism of the peptidoglycan (PG) sacculus. Their lytic action creates space within the PG sacculus to allow for its expansion as well as for the insertion of various structures such as secretion systems and flagella. The protein is Membrane-bound lytic murein transglycosylase F of Ectopseudomonas mendocina (strain ymp) (Pseudomonas mendocina).